Here is a 119-residue protein sequence, read N- to C-terminus: Small ribosomal subunit protein uS13m (119 aa).

This sequence belongs to the universal ribosomal protein uS13 family. As to quaternary structure, component of the mitochondrial small ribosomal subunit (mt-SSU). Mature N.crassa 74S mitochondrial ribosomes consist of a small (37S) and a large (54S) subunit. The 37S small subunit contains a 16S ribosomal RNA (16S mt-rRNA) and 32 different proteins. The 54S large subunit contains a 23S rRNA (23S mt-rRNA) and 42 different proteins.

The protein resides in the mitochondrion. Component of the mitochondrial ribosome (mitoribosome), a dedicated translation machinery responsible for the synthesis of mitochondrial genome-encoded proteins, including at least some of the essential transmembrane subunits of the mitochondrial respiratory chain. The mitoribosomes are attached to the mitochondrial inner membrane and translation products are cotranslationally integrated into the membrane. The protein is Small ribosomal subunit protein uS13m (sws2) of Neurospora crassa (strain ATCC 24698 / 74-OR23-1A / CBS 708.71 / DSM 1257 / FGSC 987).